The primary structure comprises 496 residues: Sugar transporter ERD6 (496 aa).

A run of 6 helical transmembrane segments spans residues 58 to 78 (VFLS…GVGF), 94 to 114 (VAEY…GAVF), 128 to 148 (MLFC…AQNA), 156 to 176 (LLLG…IAEI), 183 to 203 (GSFV…FFII), and 211 to 231 (LLTV…FFIP). Ser-256 bears the Phosphoserine mark. A run of 6 helical transmembrane segments spans residues 292–312 (YPLI…SSGV), 329–349 (IGTS…TVLV), 364–384 (AMGL…FGIL), 394–414 (IGVL…PWII), 430–450 (LVTV…NFML), and 456–476 (GMFL…YFLV).

Belongs to the major facilitator superfamily. Sugar transporter (TC 2.A.1.1) family. As to expression, expressed in both shoots and roots. In roots, expressed in epidermal cells and especially strongly in cortex cells. In flowers, expressed in sepals.

It localises to the membrane. In terms of biological role, sugar transporter. The chain is Sugar transporter ERD6 (ERD6) from Arabidopsis thaliana (Mouse-ear cress).